A 194-amino-acid chain; its full sequence is dITP/XTP pyrophosphatase (194 aa).

Residue 8–13 (TKNKGK) coordinates substrate. 2 residues coordinate Mg(2+): E41 and D70. D70 serves as the catalytic Proton acceptor. Substrate contacts are provided by residues S71, 153–156 (FGYD), K176, and 181–182 (HR).

The protein belongs to the HAM1 NTPase family. In terms of assembly, homodimer. Mg(2+) is required as a cofactor.

It carries out the reaction XTP + H2O = XMP + diphosphate + H(+). The enzyme catalyses dITP + H2O = dIMP + diphosphate + H(+). The catalysed reaction is ITP + H2O = IMP + diphosphate + H(+). Pyrophosphatase that catalyzes the hydrolysis of nucleoside triphosphates to their monophosphate derivatives, with a high preference for the non-canonical purine nucleotides XTP (xanthosine triphosphate), dITP (deoxyinosine triphosphate) and ITP. Seems to function as a house-cleaning enzyme that removes non-canonical purine nucleotides from the nucleotide pool, thus preventing their incorporation into DNA/RNA and avoiding chromosomal lesions. The polypeptide is dITP/XTP pyrophosphatase (Halalkalibacterium halodurans (strain ATCC BAA-125 / DSM 18197 / FERM 7344 / JCM 9153 / C-125) (Bacillus halodurans)).